The following is a 325-amino-acid chain: MEKYIIKLKNKVLREKEISYEEALNLISLDTNNKNDFDILLKSANEIREYFMGRKADLCTIMNAKSGKCSEDCKFCAQSSYYKTGVEEYSLLDYNEILNRAKEMESKGVHRFSLVTSGKGMSGKEFNNILNIYEGLRENTNLKLCASLGIIDYEQAKMLKSAGVTTYHHNVETCRDNFHNICTTHTYKDRIKTIKDAKKAGLDVCVGGIIGMNESEEQRLKMAFEIRELNVKSFPINILNPIKNTPMENYDVLEPMEILKTTAVFRFIIPNVYIRYAGGRLSLKGYDKVGFNGGVNSAIVGDYLTTVGSGIENDKKMIIEQGFEL.

The 230-residue stretch at 51–280 (FMGRKADLCT…NVYIRYAGGR (230 aa)) folds into the Radical SAM core domain. Residues Cys-69, Cys-73, and Cys-76 each coordinate [4Fe-4S] cluster. [2Fe-2S] cluster-binding residues include Ser-113, Cys-145, Cys-205, and Arg-275.

Belongs to the radical SAM superfamily. Biotin synthase family. In terms of assembly, homodimer. [4Fe-4S] cluster serves as cofactor. [2Fe-2S] cluster is required as a cofactor.

The catalysed reaction is (4R,5S)-dethiobiotin + (sulfur carrier)-SH + 2 reduced [2Fe-2S]-[ferredoxin] + 2 S-adenosyl-L-methionine = (sulfur carrier)-H + biotin + 2 5'-deoxyadenosine + 2 L-methionine + 2 oxidized [2Fe-2S]-[ferredoxin]. Its pathway is cofactor biosynthesis; biotin biosynthesis; biotin from 7,8-diaminononanoate: step 2/2. Functionally, catalyzes the conversion of dethiobiotin (DTB) to biotin by the insertion of a sulfur atom into dethiobiotin via a radical-based mechanism. In Clostridioides difficile (strain 630) (Peptoclostridium difficile), this protein is Biotin synthase.